The following is a 326-amino-acid chain: DNA-directed RNA polymerase subunit alpha (326 aa).

The segment at 1 to 231 (MQTNLLKPKI…DQLVVFAALE (231 aa)) is alpha N-terminal domain (alpha-NTD). The interval 247–326 (VDPMLMRPVD…ESWPPANLEK (80 aa)) is alpha C-terminal domain (alpha-CTD).

It belongs to the RNA polymerase alpha chain family. As to quaternary structure, homodimer. The RNAP catalytic core consists of 2 alpha, 1 beta, 1 beta' and 1 omega subunit. When a sigma factor is associated with the core the holoenzyme is formed, which can initiate transcription.

It carries out the reaction RNA(n) + a ribonucleoside 5'-triphosphate = RNA(n+1) + diphosphate. In terms of biological role, DNA-dependent RNA polymerase catalyzes the transcription of DNA into RNA using the four ribonucleoside triphosphates as substrates. This is DNA-directed RNA polymerase subunit alpha from Polynucleobacter asymbioticus (strain DSM 18221 / CIP 109841 / QLW-P1DMWA-1) (Polynucleobacter necessarius subsp. asymbioticus).